A 406-amino-acid polypeptide reads, in one-letter code: Peptide transporter imqD (406 aa).

The tract at residues 1 to 25 (MTAPADSTEKSETSETTTLQTTEVS) is disordered. Positions 14 to 25 (SETTTLQTTEVS) are enriched in low complexity. 6 helical membrane passes run 184–204 (GLVA…LSQA), 220–240 (IPND…GPVI), 262–282 (ATGF…QKII), 309–329 (VFLQ…SFVT), 344–364 (AVVQ…GIAI), and 373–393 (LIWM…VFWI).

Belongs to the major facilitator superfamily. Proton-dependent oligopeptide transporter (POT/PTR) (TC 2.A.17) family.

It localises to the membrane. In terms of biological role, peptide transporter; part of the gene cluster that mediates the biosynthesis of imizoquins A to D, tripeptide-derived alkaloids that serve a protective role against oxidative stress that are essential for normal germination. The polypeptide is Peptide transporter imqD (Aspergillus flavus (strain ATCC 200026 / FGSC A1120 / IAM 13836 / NRRL 3357 / JCM 12722 / SRRC 167)).